A 273-amino-acid polypeptide reads, in one-letter code: DNA replication complex GINS protein psf2 (273 aa).

2 disordered regions span residues 88-110 and 240-273; these read KEDP…SQPG and ASAE…DMGL. The span at 244 to 257 shows a compositional bias: basic and acidic residues; the sequence is ATRREEEEEARRGG. Residues 261–273 are compositionally biased toward acidic residues; it reads GDGDEDSDEDMGL.

It belongs to the GINS2/PSF2 family. In terms of assembly, component of the GINS complex which is a heterotetramer of div-26/sld5, drc-1/psf1, drc-2/psf2 and drc-3/psf3.

Its subcellular location is the nucleus. The GINS complex plays an essential role in the initiation of DNA replication. Has a role in chromosome segregation. This Neurospora crassa (strain ATCC 24698 / 74-OR23-1A / CBS 708.71 / DSM 1257 / FGSC 987) protein is DNA replication complex GINS protein psf2 (drc-2).